Consider the following 498-residue polypeptide: ATP synthase subunit beta, chloroplastic (498 aa).

Position 172 to 179 (172 to 179 (GGAGVGKT)) interacts with ATP.

It belongs to the ATPase alpha/beta chains family. As to quaternary structure, F-type ATPases have 2 components, CF(1) - the catalytic core - and CF(0) - the membrane proton channel. CF(1) has five subunits: alpha(3), beta(3), gamma(1), delta(1), epsilon(1). CF(0) has four main subunits: a(1), b(1), b'(1) and c(9-12).

It is found in the plastid. It localises to the chloroplast thylakoid membrane. It carries out the reaction ATP + H2O + 4 H(+)(in) = ADP + phosphate + 5 H(+)(out). In terms of biological role, produces ATP from ADP in the presence of a proton gradient across the membrane. The catalytic sites are hosted primarily by the beta subunits. The sequence is that of ATP synthase subunit beta, chloroplastic from Gossypium hirsutum (Upland cotton).